Here is a 610-residue protein sequence, read N- to C-terminus: Propanediol dehydratase-reactivating factor large subunit (610 aa).

11 to 13 (NSS) contributes to the ATP binding site. Mg(2+) is bound by residues Thr105, Asp166, and Asp183. ATP-binding positions include 459–462 (EEIK), 557–558 (GS), and Arg591.

Belongs to the DdrA/PduG family. As to quaternary structure, forms a heterotetramer PduG(2)/PduH(2). Requires Mg(2+) as cofactor.

It localises to the bacterial microcompartment. It catalyses the reaction ATP + H2O = ADP + phosphate + H(+). The protein operates within polyol metabolism; 1,2-propanediol degradation. Its function is as follows. Large subunit of the propanediol dehydratase-reactivating factor (DDR), which reactivates suicidally inhibited adenosylcobalamin-dependent propanediol dehydratase (diol dehydratase, DDH) found in the bacterial microcompartment (BMC) dedicated to 1,2-propanediol (1,2-PD) degradation. Reactivates inactivated DDH in the presence of ATP, Mg(2+) and free adenosylcobalamin (AdoCbl), by mediating the exchange of the tightly bound damaged cofactor AdoCbl for a free intact one. This subunit contains the adenosine nucleotide binding site. In terms of biological role, expression of a cosmid containing the full 21-gene pdu operon in E.coli allows E.coli to grow on 1,2-propanediol (1,2-PD) with the appearance of bacterial microcompartments (BMC) in its cytoplasm. The 1,2-PD-specific bacterial microcompartment (BMC) concentrates low levels of 1,2-PD catabolic enzymes, concentrates volatile reaction intermediates thus enhancing pathway flux and keeps the level of toxic, mutagenic propionaldehyde low. This Citrobacter freundii protein is Propanediol dehydratase-reactivating factor large subunit.